A 516-amino-acid chain; its full sequence is Probable inactive beta-glucosidase 14 (516 aa).

A signal peptide spans M1–A23. Residues Q43, H145, and N190–Q191 contribute to the a beta-D-glucoside site. The N-linked (GlcNAc...) asparagine glycan is linked to N193. C210 and C217 form a disulfide bridge. N-linked (GlcNAc...) asparagine glycosylation is found at N221 and N270. Y334 serves as a coordination point for a beta-D-glucoside. A disulfide bridge connects residues C342 and C347. Position 405 (E405) interacts with a beta-D-glucoside. The active-site Nucleophile is E405. N415 and N423 each carry an N-linked (GlcNAc...) asparagine glycan. A beta-D-glucoside contacts are provided by residues W454, E461–W462, and F470.

This sequence belongs to the glycosyl hydrolase 1 family. Expressed in flowers and endosperm.

The chain is Probable inactive beta-glucosidase 14 from Oryza sativa subsp. japonica (Rice).